We begin with the raw amino-acid sequence, 104 residues long: ATP-dependent Clp protease adapter protein ClpS (104 aa).

Belongs to the ClpS family. In terms of assembly, binds to the N-terminal domain of the chaperone ClpA.

Involved in the modulation of the specificity of the ClpAP-mediated ATP-dependent protein degradation. The polypeptide is ATP-dependent Clp protease adapter protein ClpS (Paraburkholderia phymatum (strain DSM 17167 / CIP 108236 / LMG 21445 / STM815) (Burkholderia phymatum)).